We begin with the raw amino-acid sequence, 230 residues long: Rab15 effector protein (230 aa).

Gly2 is lipidated: N-myristoyl glycine.

As to quaternary structure, interacts with the GTP-bound form of RAB15, RAB3A-D and RAB34.

The protein localises to the early endosome membrane. Its function is as follows. Effector that interacts with Rab GTPases in their active form (GTP-bound) including RAB15, RAB3A-D and RAB34. Controls downstream signaling such as cell proliferation and cell migration. Also regulates transferrin receptor recycling from the endocytic recycling compartment. The protein is Rab15 effector protein of Mus musculus (Mouse).